The following is a 700-amino-acid chain: MTTLEEISALTRPRHPDYWTEIDSAAVDTIRVLAADAVQKVGNGHPGTAMSLAPLAYTLFQRTMRHDPSDTHWLGRDRFVLSAGHSSLTLYIQLYLGGFGLELSDIESLRTWGSKTPGHPEFRHTPGVEITTGPLGQGLASAVGMAMASRYERGLFDPDAEPGASPFDHYIYVIASDGDIEEGVTSEASSLAAVQQLGNLIVFYDRNQISIEDDTNIALCEDTAARYRAYGWHVQEVEGGENVVGIEEAIANAQAVTDRPSFIALRTVIGYPAPNLMDTGKAHGAALGDDEVAAVKKIVGFDPDKTFQVREDVLTHTRGLVARGKQAHERWQLEFDAWARREPERKALLDRLLAQKLPDGWDADLPHWEPGSKALATRAASGAVLSALGPKLPELWGGSADLAGSNNTTIKGADSFGPPSISTKEYTAHWYGRTLHFGVREHAMGAILSGIVLHGPTRAYGGTFLQFSDYMRPAVRLAALMDIDTIYVWTHDSIGLGEDGPTHQPIEHLSALRAIPRLSVVRPADANETAYAWRTILARRNGSGPVGLILTRQGVPVLDGTDAEGVARGGYVLSDAGGLQPGEEPDVILIATGSEVQLAVAAQTLLADNDILARVVSMPCLEWFEAQPYEYRDAVLPPTVSARVAVEAGVAQCWHQLVGDTGEIVSIEHYGESADHKTLFREYGFTAEAVAAAAERALDN.

The residue at position 2 (T2) is an N-acetylthreonine. Residue H45 coordinates substrate. Thiamine diphosphate contacts are provided by residues T48, H85, 133-135 (GPL), and L135. D177 provides a ligand contact to Mg(2+). 2 residues coordinate thiamine diphosphate: G178 and N207. The Mg(2+) site is built by N207 and I209. Residues H283, R378, and S405 each coordinate substrate. H283 lines the thiamine diphosphate pocket. The active-site Proton donor is E441. Residue F467 coordinates thiamine diphosphate. Substrate-binding residues include H491, D499, and R552.

Belongs to the transketolase family. As to quaternary structure, homodimer. Mg(2+) serves as cofactor. It depends on Ca(2+) as a cofactor. Requires Mn(2+) as cofactor. Co(2+) is required as a cofactor. The cofactor is thiamine diphosphate.

The catalysed reaction is D-sedoheptulose 7-phosphate + D-glyceraldehyde 3-phosphate = aldehydo-D-ribose 5-phosphate + D-xylulose 5-phosphate. In terms of biological role, catalyzes the reversible transfer of a two-carbon ketol group from sedoheptulose-7-phosphate to glyceraldehyde-3-phosphate, producing xylulose-5-phosphate and ribose-5-phosphate. Catalyzes the transfer of a two-carbon ketol group from a ketose donor to an aldose acceptor, via a covalent intermediate with the cofactor thiamine pyrophosphate. In Mycobacterium tuberculosis (strain ATCC 25618 / H37Rv), this protein is Transketolase (tkt).